The primary structure comprises 84 residues: ATP synthase subunit c (84 aa).

The next 2 helical transmembrane spans lie at isoleucine 9–isoleucine 29 and isoleucine 54–isoleucine 74.

The protein belongs to the ATPase C chain family. As to quaternary structure, F-type ATPases have 2 components, F(1) - the catalytic core - and F(0) - the membrane proton channel. F(1) has five subunits: alpha(3), beta(3), gamma(1), delta(1), epsilon(1). F(0) has three main subunits: a(1), b(2) and c(10-14). The alpha and beta chains form an alternating ring which encloses part of the gamma chain. F(1) is attached to F(0) by a central stalk formed by the gamma and epsilon chains, while a peripheral stalk is formed by the delta and b chains.

The protein localises to the cell inner membrane. Functionally, f(1)F(0) ATP synthase produces ATP from ADP in the presence of a proton or sodium gradient. F-type ATPases consist of two structural domains, F(1) containing the extramembraneous catalytic core and F(0) containing the membrane proton channel, linked together by a central stalk and a peripheral stalk. During catalysis, ATP synthesis in the catalytic domain of F(1) is coupled via a rotary mechanism of the central stalk subunits to proton translocation. In terms of biological role, key component of the F(0) channel; it plays a direct role in translocation across the membrane. A homomeric c-ring of between 10-14 subunits forms the central stalk rotor element with the F(1) delta and epsilon subunits. The protein is ATP synthase subunit c of Actinobacillus pleuropneumoniae serotype 7 (strain AP76).